A 179-amino-acid polypeptide reads, in one-letter code: CASP-like protein 5A2 (179 aa).

The segment at 1–24 is disordered; it reads MNVSHASVHPVEDPPAAATEVENP. The Cytoplasmic segment spans residues 1-38; it reads MNVSHASVHPVEDPPAAATEVENPPRVRMDDMEGMPGT. A helical transmembrane segment spans residues 39–59; the sequence is LLGLALRFFQFLFAAAALCVM. Topologically, residues 60–70 are extracellular; the sequence is ASTSDFPSVTA. Residues 71–91 traverse the membrane as a helical segment; it reads FCYLVAATGLQSLWSLALAMV. Residues 92-115 lie on the Cytoplasmic side of the membrane; it reads DVYAIMVKRSLQNRRLVSLFAIGD. A helical transmembrane segment spans residues 116–136; the sequence is GVTSTLTFAAACASAGITVLI. Over 137–155 the chain is Extracellular; it reads DNDLNSCAQNHCVQFETST. The chain crosses the membrane as a helical span at residues 156-176; that stretch reads ALAFISWFAALPSFLFNFWSL. At 177–179 the chain is on the cytoplasmic side; sequence ASR.

Belongs to the Casparian strip membrane proteins (CASP) family. As to quaternary structure, homodimer and heterodimers.

The protein resides in the cell membrane. The chain is CASP-like protein 5A2 from Arabidopsis thaliana (Mouse-ear cress).